The primary structure comprises 217 residues: MSQDLEQKLWSIASGIPFVSDYFLQASPARKLKKENLFSKVFETYFLELGSGWGEVAIAMALQRRNTGFVLMEKKFDRIRHTIREIEKHSLDNVKILCVNFNWFLADVFEENLFSEILLNFPDPWPKKRHHKKRTINSKFIESLRVLLPEKGKFSFATDYGPYARKTIRLFRDSEIFKPETMEFRLERKEIPVSHFERKKRKEGKRIYYIDQILIRK.

E48, E73, N100, and D123 together coordinate S-adenosyl-L-methionine. D123 is a catalytic residue. 2 residues coordinate substrate: K127 and D159.

This sequence belongs to the class I-like SAM-binding methyltransferase superfamily. TrmB family.

It catalyses the reaction guanosine(46) in tRNA + S-adenosyl-L-methionine = N(7)-methylguanosine(46) in tRNA + S-adenosyl-L-homocysteine. Its pathway is tRNA modification; N(7)-methylguanine-tRNA biosynthesis. Functionally, catalyzes the formation of N(7)-methylguanine at position 46 (m7G46) in tRNA. In Leptospira borgpetersenii serovar Hardjo-bovis (strain JB197), this protein is tRNA (guanine-N(7)-)-methyltransferase.